We begin with the raw amino-acid sequence, 313 residues long: Mitochondrial uncoupling protein 5 (313 aa).

Solcar repeat units follow at residues 4–108 (KGFA…IKGE), 117–208 (MPLM…VKET), and 217–307 (DGLG…VKKL). A run of 6 helical transmembrane segments spans residues 6–26 (FAEG…LDLI), 77–97 (MRAL…YSTT), 123–143 (IGAG…ADVA), 182–202 (RGSS…LASY), 223–243 (VSAS…VDVI), and 280–300 (YKGF…LFVT).

It belongs to the mitochondrial carrier (TC 2.A.29) family. As to expression, expressed in roots, leaves, stems and flowers.

Its subcellular location is the mitochondrion inner membrane. Its function is as follows. PUMPS are mitochondrial transporter proteins that create proton leaks across the inner mitochondrial membrane, thus uncoupling oxidative phosphorylation. This leads to a decrease in the efficiency of oxidative phosphorylation and an increase in heat production. May be involved in protecting plant cells against oxidative stress damage. Recombinant PUMP5, reconstituted into liposomes, transports a wide range of dicarboxylic acids including malate, oxaloacetate and succinate as well as phosphate, sulfate and thiosulfate. However, it is unknown if these transports are of any biological significance in vivo. The polypeptide is Mitochondrial uncoupling protein 5 (PUMP5) (Arabidopsis thaliana (Mouse-ear cress)).